Here is a 1902-residue protein sequence, read N- to C-terminus: PII-type proteinase (1902 aa).

Residues 1–33 (MQRKKKGLSILLAGTVALGALAVLPVGEIQAKA) form the signal peptide. The propeptide occupies 34 to 187 (AISQQTKGSS…VTLAKVYYPT (154 aa)). The Peptidase S8 domain maps to 191 to 697 (ANSMANVQAV…AGLVDVKAAI (507 aa)). Residues Asp217, His281, and Ser620 each act as charge relay system in the active site. The tract at residues 1796 to 1874 (GKGDGTTGTS…GALPKTGETT (79 aa)) is disordered. A compositionally biased stretch (gly residues) spans 1797–1812 (KGDGTTGTSDKGGGQG). The span at 1830 to 1843 (SQPSSGGNIPTNPA) shows a compositional bias: polar residues. The short motif at 1867–1871 (LPKTG) is the LPXTG sorting signal element. A Pentaglycyl murein peptidoglycan amidated threonine modification is found at Thr1870. The propeptide at 1871–1902 (GETTERPAFGFLGVIVVSLMGVLGLKRKQREE) is removed by sortase.

Belongs to the peptidase S8 family.

It localises to the secreted. It is found in the cell wall. It carries out the reaction Endopeptidase activity with very broad specificity, although some subsite preference have been noted, e.g. large hydrophobic residues in the P1 and P4 positions, and Pro in the P2 position. Best known for its action on caseins, although it has been shown to hydrolyze hemoglobin and oxidized insulin B-chain.. Functionally, protease which breaks down milk proteins during the growth of the bacteria on milk. In Lactococcus lactis subsp. cremoris (Streptococcus cremoris), this protein is PII-type proteinase (prt).